A 1007-amino-acid chain; its full sequence is MAAAETQSLREQPEMEDANSEKSINEENGEVSEDQSQNKHSRHKKKKHKHRSKHKKHKHSSEEDKDKKHKHKHKHKKHKRKEVIDASDKEGMSPAKRTKLDDLALLEDLEKQRALIKAELDNELMEGKVQSGMGLILQGYESGSEEEGEIHEKARNGNRSSTRSSSTKGKLELVDNKITTKKRSKSRSKERTRHRSDKKKSKGGIEIIKEKTTRSKSKERKKSKSPSKRSKSQDQARKSKSPTLRRRSQEKIGKARSPTDDKVKIEDKSKSKDRKKSPIINESRSRDRGKKSRSPVDLRGKSKDRRSRSKERKSKRSETDKEKKPIKSPSKDASSGKENRSPSRRPGRSPKRRSLSPKPRDKSRRSRSPLLNDRRSKQSKSPSRTLSPGRRAKSRSLERKRREPERRRLSSPRTRPRDDILSRRERSKDASPINRWSPTRRRSRSPIRRRSRSPLRRSRSPRRRSRSPRRRDRGRRSRSRLRRRSRSRGGRRRRSRSKVKEDKFKGSLSEGMKVEQESSSDDNLEDFDVEEEDEEALIEQRRIQRQAIVQKYKYLAEDSNMSVPSEPSSPQSSTRTRSPSPDDILERVAADVKEYERENVDTFEASVKAKHNLMTVEQNNGSSQKKLLAPDMFTESDDMFAAYFDSARLRAAGIGKDFKENPNLRDNWTDAEGYYRVNIGEVLDKRYNVYGYTGQGVFSNVVRARDNARASQEVAVKIIRNNELMQKTGLKELEFLKKLNDADPDDKFHCLRLFRHFYHKQHLCLVFEPLSMNLREVLKKYGKDVGLHIKAVRSYSQQLFLALKLLKRCNILHADIKPDNILVNESKTILKLCDFGSASHVADNDITPYLVSRFYRAPEIIIGKSYDYGIDMWSVGCTLYELYTGKILFPGKTNNHMLKLAMDLKGKMPNKMIRKGVFKDQHFDPNLNFMYIEVDKVTEREKVTVMSTINPTKDLLADLIGCQRLPEDQRKKVHQLKDLLDQILMLDPAKRISINQALQHAFIQEKI.

The segment covering 1 to 10 (MAAAETQSLR) has biased composition (polar residues). The interval 1–99 (MAAAETQSLR…EGMSPAKRTK (99 aa)) is disordered. Position 2 is an N-acetylalanine (Ala-2). Phosphoserine occurs at positions 8, 20, 23, and 32. Basic residues-rich tracts occupy residues 39–59 (KHSR…KHKH) and 67–81 (KKHK…HKRK). Basic and acidic residues predominate over residues 82 to 91 (EVIDASDKEG). A phosphoserine mark is found at Ser-87 and Ser-93. Lys-99 bears the N6-acetyllysine; alternate mark. Lys-99 is covalently cross-linked (Glycyl lysine isopeptide (Lys-Gly) (interchain with G-Cter in SUMO2); alternate). Residue Lys-111 forms a Glycyl lysine isopeptide (Lys-Gly) (interchain with G-Cter in SUMO2) linkage. Lys-117 participates in a covalent cross-link: Glycyl lysine isopeptide (Lys-Gly) (interchain with G-Cter in SUMO2); alternate. Lys-117 is covalently cross-linked (Glycyl lysine isopeptide (Lys-Gly) (interchain with G-Cter in SUMO1); alternate). Residue Ser-131 is modified to Phosphoserine. At Tyr-140 the chain carries Phosphotyrosine. Disordered stretches follow at residues 140-533 (YESG…EEED) and 559-583 (SNMS…SPDD). Phosphoserine is present on residues Ser-142, Ser-144, and Ser-166. Over residues 157–168 (GNRSSTRSSSTK) the composition is skewed to low complexity. Residues Lys-170 and Lys-177 each participate in a glycyl lysine isopeptide (Lys-Gly) (interchain with G-Cter in SUMO2) cross-link. Basic residues-rich tracts occupy residues 179–202 (TTKK…KKSK) and 214–230 (RSKS…SKRS). Residues Ser-239, Ser-241, Ser-257, Ser-277, Ser-283, Ser-292, and Ser-294 each carry the phosphoserine modification. Over residues 247–270 (RSQEKIGKARSPTDDKVKIEDKSK) the composition is skewed to basic and acidic residues. Residues 302 to 315 (SKDRRSRSKERKSK) show a composition bias toward basic residues. A compositionally biased stretch (basic and acidic residues) spans 316–325 (RSETDKEKKP). Phosphoserine occurs at positions 328, 354, 356, 366, and 368. Residues 342–367 (PSRRPGRSPKRRSLSPKPRDKSRRSR) are compositionally biased toward basic residues. Thr-385 carries the phosphothreonine modification. Position 387 is a phosphoserine (Ser-387). Composition is skewed to basic and acidic residues over residues 395-408 (RSLE…ERRR) and 415-429 (RPRD…RSKD). Ser-427, Ser-431, and Ser-437 each carry phosphoserine. Positions 438–497 (PTRRRSRSPIRRRSRSPLRRSRSPRRRSRSPRRRDRGRRSRSRLRRRSRSRGGRRRRSRS) are enriched in basic residues. Phosphoserine occurs at positions 518, 519, 520, 565, 569, 578, and 580. A compositionally biased stretch (acidic residues) spans 518 to 533 (SSSDDNLEDFDVEEED). The segment covering 562-581 (SVPSEPSSPQSSTRTRSPSP) has biased composition (low complexity). Residues Lys-593 and Lys-659 each participate in a glycyl lysine isopeptide (Lys-Gly) (interchain with G-Cter in SUMO2) cross-link. The region spanning 687–1003 (YNVYGYTGQG…INQALQHAFI (317 aa)) is the Protein kinase domain. Residues 693 to 701 (TGQGVFSNV) and Lys-717 each bind ATP. An N6-acetyllysine modification is found at Lys-717. Residue Asp-815 is the Proton acceptor of the active site. Tyr-849 carries the post-translational modification Phosphotyrosine. Ser-852 carries the post-translational modification Phosphoserine.

Belongs to the protein kinase superfamily. CMGC Ser/Thr protein kinase family. As to quaternary structure, interacts with CLK1 C-terminus. Associates with the U5 snRNP and NCOR1 deacetylase complexes. Identified in the spliceosome C complex. Phosphorylated by CLK1. Autophosphorylated; phosphorylation inhibits interaction with its targets, such as PRPF6 or SMARCA4.

The protein localises to the nucleus. The protein resides in the chromosome. It is found in the centromere. It localises to the kinetochore. It catalyses the reaction L-seryl-[protein] + ATP = O-phospho-L-seryl-[protein] + ADP + H(+). The catalysed reaction is L-threonyl-[protein] + ATP = O-phospho-L-threonyl-[protein] + ADP + H(+). Serine/threonine kinase involved in spliceosomal assembly as well as mitosis and signaling regulation. Connects chromatin mediated regulation of transcription and pre-mRNA splicing. During spliceosomal assembly, interacts with and phosphorylates PRPF6 and PRPF31, components of the U4/U6-U5 tri-small nuclear ribonucleoprotein (snRNP), to facilitate the formation of the spliceosome B complex. Plays a role in regulating transcription and the spindle assembly checkpoint (SAC). Associates with U5 snRNP and NCOR1 deacetylase complexes which may allow a coordination of pre-mRNA splicing with chromatin remodeling events involved in transcriptional regulation. Associates and probably phosphorylates SMARCA4 and NCOR1. Phosphorylates SRSF1. Associates with kinetochores during mitosis and is necessary for recruitment and maintenance of the checkpoint proteins such as MAD1L1 and MAD12L1 at the kinetochores. Phosphorylates and regulates the activity of the transcription factors such as ELK1 and KLF13. Phosphorylates nuclear YAP1 and WWTR1/TAZ which induces nuclear exclusion and regulates Hippo signaling pathway, involved in tissue growth control. The chain is Serine/threonine-protein kinase PRP4 homolog (PRP4K) from Pongo abelii (Sumatran orangutan).